A 68-amino-acid polypeptide reads, in one-letter code: Small, acid-soluble spore protein I (68 aa).

The protein belongs to the SspI family.

Its subcellular location is the spore core. This Halalkalibacterium halodurans (strain ATCC BAA-125 / DSM 18197 / FERM 7344 / JCM 9153 / C-125) (Bacillus halodurans) protein is Small, acid-soluble spore protein I.